Consider the following 601-residue polypeptide: Elongation factor 4 (601 aa).

The region spanning 6-188 is the tr-type G domain; it reads KFTRNFSIIA…AICYLLPPPV (183 aa). Residues 18–23 and 135–138 contribute to the GTP site; these read DHGKST and NKID.

Belongs to the TRAFAC class translation factor GTPase superfamily. Classic translation factor GTPase family. LepA subfamily.

It localises to the cell inner membrane. It catalyses the reaction GTP + H2O = GDP + phosphate + H(+). In terms of biological role, required for accurate and efficient protein synthesis under certain stress conditions. May act as a fidelity factor of the translation reaction, by catalyzing a one-codon backward translocation of tRNAs on improperly translocated ribosomes. Back-translocation proceeds from a post-translocation (POST) complex to a pre-translocation (PRE) complex, thus giving elongation factor G a second chance to translocate the tRNAs correctly. Binds to ribosomes in a GTP-dependent manner. The sequence is that of Elongation factor 4 from Leptospira biflexa serovar Patoc (strain Patoc 1 / Ames).